The following is a 179-amino-acid chain: Large ribosomal subunit protein uL6 (179 aa).

Belongs to the universal ribosomal protein uL6 family. As to quaternary structure, part of the 50S ribosomal subunit.

Its function is as follows. This protein binds to the 23S rRNA, and is important in its secondary structure. It is located near the subunit interface in the base of the L7/L12 stalk, and near the tRNA binding site of the peptidyltransferase center. The chain is Large ribosomal subunit protein uL6 from Desulfovibrio desulfuricans (strain ATCC 27774 / DSM 6949 / MB).